A 207-amino-acid chain; its full sequence is Large ribosomal subunit protein uL4 (207 aa).

The segment at Glu56–Gly76 is disordered. Over residues Gly60–Gly71 the composition is skewed to basic residues.

The protein belongs to the universal ribosomal protein uL4 family. As to quaternary structure, part of the 50S ribosomal subunit.

Its function is as follows. One of the primary rRNA binding proteins, this protein initially binds near the 5'-end of the 23S rRNA. It is important during the early stages of 50S assembly. It makes multiple contacts with different domains of the 23S rRNA in the assembled 50S subunit and ribosome. In terms of biological role, forms part of the polypeptide exit tunnel. In Desulfitobacterium hafniense (strain DSM 10664 / DCB-2), this protein is Large ribosomal subunit protein uL4.